The primary structure comprises 453 residues: MKHIHILGICGTFMGGVAMIAKQMGYHVTGSDTNVYPPMSTFLEEQGIEIIPNYDVAQLQPAPDMVIVGNAMKRGNPCVEYVLENNLKYTSGPQWLHDHLLRDRWVLAVSGTHGKTTTTGMLTWVLEQNGLKSGFLIGGIAGNFGISARLGDSPYFIIEADEYDTAFFDKRSKFVHYNPRTLIVNNISFDHADIFDDLKAIQRQFHHMIRTIPASGLVLSSASEQSAKETLALGCWSQQQFLGKDNEWFAERITNDASHFAVFHHGEKVAEVKWNVVGQHNMHNALMAIAAAHHTGVAIEDACKALGSFVNAKRRLEVKGEVNSITVYDDFAHHPEAILATLTALRDKVGGGVRILAVLEPRSNTMKMGVHKDDIAPALGRADAVFMLQPEQLSWEVADIANQCVQPAYWNANLDRLVDMIVAKAQPTDHILVMSNGSFGGIHQKILDKLKLK.

111-117 contributes to the ATP binding site; it reads GTHGKTT.

Belongs to the MurCDEF family. Mpl subfamily. Requires Mg(2+) as cofactor.

The enzyme catalyses UDP-N-acetyl-alpha-D-muramate + L-alanyl-gamma-D-glutamyl-meso-2,6-diaminopimelate + ATP = UDP-N-acetyl-alpha-D-muramoyl-L-alanyl-gamma-D-glutamyl-meso-2,6-diaminopimelate + ADP + phosphate + H(+). Its pathway is cell wall biogenesis; peptidoglycan recycling. Its function is as follows. Reutilizes the intact tripeptide L-alanyl-gamma-D-glutamyl-meso-diaminopimelate by linking it to UDP-N-acetylmuramate. This chain is UDP-N-acetylmuramate--L-alanyl-gamma-D-glutamyl-meso-2,6-diaminoheptandioate ligase, found in Haemophilus influenzae (strain ATCC 51907 / DSM 11121 / KW20 / Rd).